A 54-amino-acid chain; its full sequence is Large ribosomal subunit protein bL33B (54 aa).

The protein belongs to the bacterial ribosomal protein bL33 family.

In Mycobacterium sp. (strain KMS), this protein is Large ribosomal subunit protein bL33B.